Consider the following 345-residue polypeptide: MFIDSVKITLASGDGGKGAVSFRREKHVPLGGPDGGDGGNGGDIIFVCDNNTHTLVNFKGKRELRAQNGAGGMGRNKNGKKGENLELIVPEGTQVIDAQTNEILLDLTKEGQRELFLKGGKGGLGNTHFKHATNQRPDYAQPGIKGESRLVRLELKLIADVGLVGFPNVGKSTLISVVSNAKPEIANYEFTTLTPKLGLVDVDEYNSFVMADIPGIIEGASGGKGLGLAFLKHIERTSFLLFVLDPMRQMPLKEQFIVLRKELEKFSNELFGRKFGIMISKSDSVNLGEEFAEQITLNINELENYLKEINNPQSFLIKVSSLEKTGLKELKFMLLEEIKTLRNNK.

The 158-residue stretch at 1–158 folds into the Obg domain; sequence MFIDSVKITL…RLVRLELKLI (158 aa). Positions 159-339 constitute an OBG-type G domain; the sequence is ADVGLVGFPN…LKFMLLEEIK (181 aa). GTP-binding positions include 165-172, 190-194, 212-215, 280-283, and 320-322; these read GFPNVGKS, FTTLT, DIPG, SKSD, and SSL. Serine 172 and threonine 192 together coordinate Mg(2+).

Belongs to the TRAFAC class OBG-HflX-like GTPase superfamily. OBG GTPase family. Monomer. Requires Mg(2+) as cofactor.

The protein resides in the cytoplasm. Its function is as follows. An essential GTPase which binds GTP, GDP and possibly (p)ppGpp with moderate affinity, with high nucleotide exchange rates and a fairly low GTP hydrolysis rate. Plays a role in control of the cell cycle, stress response, ribosome biogenesis and in those bacteria that undergo differentiation, in morphogenesis control. The sequence is that of GTPase Obg from Campylobacter jejuni subsp. jejuni serotype O:6 (strain 81116 / NCTC 11828).